Consider the following 84-residue polypeptide: Turripeptide IX-01 (84 aa).

The signal sequence occupies residues 1 to 21; the sequence is MGFYMLLTVALLLTSFMSVEA. A propeptide spanning residues 22–39 is cleaved from the precursor; sequence TPVDQAERSAMKESGLAH. Intrachain disulfides connect cysteine 48/cysteine 70, cysteine 55/cysteine 74, and cysteine 60/cysteine 81.

Expressed by the venom duct.

Its subcellular location is the secreted. The chain is Turripeptide IX-01 from Gemmula speciosa (Splendid gem-turris).